A 486-amino-acid chain; its full sequence is Zinc metalloproteinase-disintegrin VMP-II (486 aa).

The N-terminal stretch at 1–20 (MIQVLLVTICLAVFPYQGSS) is a signal peptide. A propeptide spanning residues 21–190 (IILESGNVND…KASQSNLPPE (170 aa)) is cleaved from the precursor. Residue Q191 is modified to Pyrrolidone carboxylic acid. The 198-residue stretch at 197–394 (RYIELVVVAD…HYTTCLYNEP (198 aa)) folds into the Peptidase M12B domain. E200 and D284 together coordinate Ca(2+). Disulfide bonds link C308–C389, C348–C372, and C350–C355. H333 provides a ligand contact to Zn(2+). E334 is a catalytic residue. Zn(2+)-binding residues include H337 and H343. Ca(2+)-binding residues include C389 and N392. The Disintegrin domain maps to 402 to 486 (PPVCGNYYTE…AECPNKGYYG (85 aa)). 7 disulfide bridges follow: C405–C424, C416–C434, C418–C429, C428–C451, C442–C448, C447–C472, and C460–C479. The Cell attachment site signature appears at 464-466 (RGD).

Belongs to the venom metalloproteinase (M12B) family. P-II subfamily. P-IIb sub-subfamily. In terms of assembly, monomer. Requires Zn(2+) as cofactor. In terms of tissue distribution, expressed by the venom gland.

It is found in the secreted. Snake venom zinc metalloproteinase that inhibits ADP-induced platelet aggregation (probably by binding integrin alpha-IIb/beta-3 (ITGA2B/ITGB3)) and degrades fibrinogen. The polypeptide is Zinc metalloproteinase-disintegrin VMP-II (Crotalus atrox (Western diamondback rattlesnake)).